Here is a 509-residue protein sequence, read N- to C-terminus: E3 ubiquitin-protein ligase RAD18 (509 aa).

Met-1 carries the N-acetylmethionine modification. The RING-type zinc finger occupies 25–64; the sequence is CGICFEYFNIAVIIPQCSHNYCSLCIRKFLSYKTQCPTCC. Phosphoserine occurs at positions 99, 103, 158, and 164. The UBZ4-type zinc finger occupies 201–228; that stretch reads KVSCPVCGVSIPENHINKHLDSCLSREE. 4 residues coordinate Zn(2+): Cys-204, Cys-207, His-219, and Cys-223. Positions 232–240 match the LR motif motif; sequence SLRSSAHKR. In terms of domain architecture, SAP spans 248–282; that stretch reads YNLLSDRDLKKKLKQYGLSVQGNKQQLIKRHQEFV. 2 disordered regions span residues 365-401 and 435-509; these read GRVS…RTDE and VSVT…RNKN. 2 stretches are compositionally biased toward polar residues: residues 435–446 and 463–473; these read VSVTNHFPQPQL and CTDILFSSDSD. Ser-485 is subject to Phosphoserine. The segment covering 493–509 has biased composition (basic and acidic residues); sequence RASECVEIEPRNKRNKN.

Belongs to the RAD18 family. In terms of assembly, homodimer. Interacts with UBE2A and UBE2B, one homodimer binding one molecule of UBE2B. Interacts with HLTF. Interacts with SHPRH. Interacts with SPRTN; leading to enhance chromatin association of RAD18 and RAD18-mediated PCNA ubiquitination and translesion DNA synthesis. Interacts (via C-terminus and phosphorylated form) with SLF1 (via BRCT domains); this interaction is required for efficient repair of UV-induced DNA damage. Interacts with SLF2. Interacts with SMC5; this interaction is increased in a SLF1 or SLF2-dependent manner. In terms of tissue distribution, expressed in thymus, spleen, brain, and ovary.

It is found in the nucleus. It localises to the cytoplasm. Its subcellular location is the cytoskeleton. The protein localises to the microtubule organizing center. The protein resides in the centrosome. The enzyme catalyses S-ubiquitinyl-[E2 ubiquitin-conjugating enzyme]-L-cysteine + [acceptor protein]-L-lysine = [E2 ubiquitin-conjugating enzyme]-L-cysteine + N(6)-ubiquitinyl-[acceptor protein]-L-lysine.. The protein operates within protein modification; protein ubiquitination. In terms of biological role, E3 ubiquitin-protein ligase involved in postreplication repair of UV-damaged DNA. Postreplication repair functions in gap-filling of a daughter strand on replication of damaged DNA. Associates to the E2 ubiquitin conjugating enzyme UBE2B to form the UBE2B-RAD18 ubiquitin ligase complex involved in mono-ubiquitination of DNA-associated PCNA on 'Lys-164'. Has ssDNA binding activity. The polypeptide is E3 ubiquitin-protein ligase RAD18 (Rad18) (Mus musculus (Mouse)).